We begin with the raw amino-acid sequence, 141 residues long: Elongation factor G, chloroplastic (141 aa).

The 130-residue stretch at 12–141 (KDYRNIGIMA…VPRICFVNKM (130 aa)) folds into the tr-type G domain. Residues 21–28 (AHIDAGKT) and 85–89 (DTPGH) each bind GTP.

It belongs to the TRAFAC class translation factor GTPase superfamily. Classic translation factor GTPase family. EF-G/EF-2 subfamily.

Its subcellular location is the plastid. It is found in the chloroplast. The protein operates within protein biosynthesis; polypeptide chain elongation. In terms of biological role, chloroplast-localized elongation factor EF-G involved in protein synthesis in plastids. Catalyzes the GTP-dependent ribosomal translocation step during translation elongation. During this step, the ribosome changes from the pre-translocational (PRE) to the post-translocational (POST) state as the newly formed A-site-bound peptidyl-tRNA and P-site-bound deacylated tRNA move to the P and E sites, respectively. Catalyzes the coordinated movement of the two tRNA molecules, the mRNA and conformational changes in the ribosome. This chain is Elongation factor G, chloroplastic (fusA), found in Pisum sativum (Garden pea).